The following is a 555-amino-acid chain: MKNINLIETKSWKDLKNHFKEVKNIHLKDLFLSDFNRFKKFSIFFENEILIDFSKNRITEKTLILLLNLAKEMNVKSAIKLMFSGSKINQTENRSVLHIALRNRSNFPILLNNSDIMSEVNDVLKKMKNFSELVIDGTWKGYSGKSISDVVNIGIGGSDLGPYMVTEALRPYKNHLNIHYVSNIDGTHLSEILKKINPETTIFLIASKTFTTDETITNANSAKFWFLKHSKTKETLDKHFFALSANINNAVNFGINIKNIFQFWDWVGGRFSLWSSAGLSIVLSIGFNNFEKFLQGAHVMDNHFYHTEYDKNIPILLALISIWYTNFFNSETEAIFPYDQYMHRFSAYFQQSNMESNGKSIDKNGNKVCYQTGPIIWGEPGTNGQHAFFQLIHQGTKLIPSDFIVPTVSHNNLNDHHLKLISNFLAQTQVLAFGKSKNSFLKESTSFKKEEDEFNRILPFKICEGNKPTNSILLRKITPYTLGMLIALYEHKIFVQGHILNIFSFDQWGVEIGKEVAQSIYKNINEKTKNSKSYDSSTQGLIDFYNFFKNKQNYL.

Glu355 (proton donor) is an active-site residue. Residues His386 and Lys514 contribute to the active site.

The protein belongs to the GPI family.

It localises to the cytoplasm. The enzyme catalyses alpha-D-glucose 6-phosphate = beta-D-fructose 6-phosphate. It functions in the pathway carbohydrate biosynthesis; gluconeogenesis. Its pathway is carbohydrate degradation; glycolysis; D-glyceraldehyde 3-phosphate and glycerone phosphate from D-glucose: step 2/4. Its function is as follows. Catalyzes the reversible isomerization of glucose-6-phosphate to fructose-6-phosphate. The chain is Glucose-6-phosphate isomerase from Buchnera aphidicola subsp. Schizaphis graminum (strain Sg).